The primary structure comprises 201 residues: Recombination protein RecR (201 aa).

The C4-type zinc finger occupies 60–75 (CSCCGNVDTIDPCTVC). Residues 83-178 (SVIIVVEDVS…KITRLAHGVP (96 aa)) form the Toprim domain.

It belongs to the RecR family.

Functionally, may play a role in DNA repair. It seems to be involved in an RecBC-independent recombinational process of DNA repair. It may act with RecF and RecO. This chain is Recombination protein RecR, found in Agrobacterium fabrum (strain C58 / ATCC 33970) (Agrobacterium tumefaciens (strain C58)).